A 236-amino-acid polypeptide reads, in one-letter code: 2-C-methyl-D-erythritol 4-phosphate cytidylyltransferase (236 aa).

This sequence belongs to the IspD/TarI cytidylyltransferase family. IspD subfamily.

It catalyses the reaction 2-C-methyl-D-erythritol 4-phosphate + CTP + H(+) = 4-CDP-2-C-methyl-D-erythritol + diphosphate. It participates in isoprenoid biosynthesis; isopentenyl diphosphate biosynthesis via DXP pathway; isopentenyl diphosphate from 1-deoxy-D-xylulose 5-phosphate: step 2/6. Functionally, catalyzes the formation of 4-diphosphocytidyl-2-C-methyl-D-erythritol from CTP and 2-C-methyl-D-erythritol 4-phosphate (MEP). This chain is 2-C-methyl-D-erythritol 4-phosphate cytidylyltransferase, found in Burkholderia orbicola (strain AU 1054).